A 296-amino-acid chain; its full sequence is Fructose-bisphosphate aldolase class 1 (296 aa).

Glu175 acts as the Proton acceptor in catalysis. Lys212 functions as the Schiff-base intermediate with dihydroxyacetone-P in the catalytic mechanism.

The protein belongs to the class I fructose-bisphosphate aldolase family.

The catalysed reaction is beta-D-fructose 1,6-bisphosphate = D-glyceraldehyde 3-phosphate + dihydroxyacetone phosphate. It participates in carbohydrate degradation; glycolysis; D-glyceraldehyde 3-phosphate and glycerone phosphate from D-glucose: step 4/4. This is Fructose-bisphosphate aldolase class 1 from Staphylococcus aureus (strain MSSA476).